Reading from the N-terminus, the 345-residue chain is D-fructose 1,6-bisphosphatase class 2/sedoheptulose 1,7-bisphosphatase (345 aa).

Asp-33, Glu-57, Asp-97, and Glu-100 together coordinate Mn(2+). Substrate is bound by residues 100-102 (EGT), Tyr-131, 176-178 (RPR), and 198-200 (DGD). Glu-225 is a binding site for Mn(2+).

The protein belongs to the FBPase class 2 family. In terms of assembly, homotetramer. Requires Mn(2+) as cofactor.

The catalysed reaction is beta-D-fructose 1,6-bisphosphate + H2O = beta-D-fructose 6-phosphate + phosphate. It catalyses the reaction D-sedoheptulose 1,7-bisphosphate + H2O = D-sedoheptulose 7-phosphate + phosphate. Its pathway is carbohydrate biosynthesis; Calvin cycle. Its function is as follows. Catalyzes the hydrolysis of fructose 1,6-bisphosphate (Fru 1,6-P2) and sedoheptulose 1,7-bisphosphate (Sed 1,7-P2) to fructose 6-phosphate and sedoheptulose 7-phosphate, respectively. In Microcystis aeruginosa (strain NIES-843 / IAM M-2473), this protein is D-fructose 1,6-bisphosphatase class 2/sedoheptulose 1,7-bisphosphatase.